A 212-amino-acid chain; its full sequence is Probable GTP-binding protein EngB (212 aa).

The region spanning 23–197 (TGIEVAFAGR…ERILDGWFGL (175 aa)) is the EngB-type G domain. Residues 31-38 (GRSNAGKS), 58-62 (GRTQL), 76-79 (DLPG), 143-146 (TKAD), and 176-178 (FSS) contribute to the GTP site. Mg(2+) is bound by residues serine 38 and threonine 60.

The protein belongs to the TRAFAC class TrmE-Era-EngA-EngB-Septin-like GTPase superfamily. EngB GTPase family. Mg(2+) is required as a cofactor.

Functionally, necessary for normal cell division and for the maintenance of normal septation. The protein is Probable GTP-binding protein EngB of Alteromonas mediterranea (strain DSM 17117 / CIP 110805 / LMG 28347 / Deep ecotype).